The sequence spans 274 residues: Formamidopyrimidine-DNA glycosylase (274 aa).

Catalysis depends on P2, which acts as the Schiff-base intermediate with DNA. E3 acts as the Proton donor in catalysis. K57 functions as the Proton donor; for beta-elimination activity in the catalytic mechanism. DNA is bound by residues H92, R111, and K152. An FPG-type zinc finger spans residues 237-271; the sequence is QVYGRKGEECRECGTLIQAKVIGQRNSYFCPDCQP. R261 functions as the Proton donor; for delta-elimination activity in the catalytic mechanism.

Belongs to the FPG family. As to quaternary structure, monomer. It depends on Zn(2+) as a cofactor.

The catalysed reaction is Hydrolysis of DNA containing ring-opened 7-methylguanine residues, releasing 2,6-diamino-4-hydroxy-5-(N-methyl)formamidopyrimidine.. It catalyses the reaction 2'-deoxyribonucleotide-(2'-deoxyribose 5'-phosphate)-2'-deoxyribonucleotide-DNA = a 3'-end 2'-deoxyribonucleotide-(2,3-dehydro-2,3-deoxyribose 5'-phosphate)-DNA + a 5'-end 5'-phospho-2'-deoxyribonucleoside-DNA + H(+). Functionally, involved in base excision repair of DNA damaged by oxidation or by mutagenic agents. Acts as a DNA glycosylase that recognizes and removes damaged bases. Has a preference for oxidized purines, such as 7,8-dihydro-8-oxoguanine (8-oxoG). Has AP (apurinic/apyrimidinic) lyase activity and introduces nicks in the DNA strand. Cleaves the DNA backbone by beta-delta elimination to generate a single-strand break at the site of the removed base with both 3'- and 5'-phosphates. The polypeptide is Formamidopyrimidine-DNA glycosylase (Haemophilus ducreyi (strain 35000HP / ATCC 700724)).